A 187-amino-acid polypeptide reads, in one-letter code: Ubiquinone biosynthesis protein COQ4 homolog, mitochondrial (187 aa).

Zn(2+)-binding residues include histidine 77, aspartate 78, histidine 81, and glutamate 93.

Belongs to the COQ4 family. Component of a multi-subunit COQ enzyme complex. The cofactor is Zn(2+).

It is found in the mitochondrion inner membrane. It catalyses the reaction a 4-hydroxy-3-methoxy-5-(all-trans-polyprenyl)benzoate + H(+) = a 2-methoxy-6-(all-trans-polyprenyl)phenol + CO2. It participates in cofactor biosynthesis; ubiquinone biosynthesis. Lyase that catalyzes the C1-decarboxylation of 4-hydroxy-3-methoxy-5-(all-trans-polyprenyl)benzoic acid into 2-methoxy-6-(all-trans-polyprenyl)phenol during ubiquinone biosynthesis. This Leishmania infantum protein is Ubiquinone biosynthesis protein COQ4 homolog, mitochondrial.